An 872-amino-acid chain; its full sequence is MSILTRWLLIPPVNARLIGRYRDYRRHGASAFSATLGCFWMILAWIFIPLEHPRWQRIRAEHKNLYPHINASRPRPLDPVRYLIQTCWLLIGASRKETPKPRRRAFSGLQNIRGRYHQWMNELPERVSHKTQHLDEKKELGHLSAGARRLILGIIVTFSLILALICVTQPFNPLAQFIFLMLLWGVALIVRRMPGRFSALMLIVLSLTVSCRYIWWRYTSTLNWDDPVSLVCGLILLFAETYAWIVLVLGYFQVVWPLNRQPVPLPKDMSLWPSVDIFVPTYNEDLNVVKNTIYASLGIDWPKDKLNIWILDDGGREEFRQFAQNVGVKYIARTTHEHAKAGNINNALKYAKGEFVSIFDCDHVPTRSFLQMTMGWFLKEKQLAMMQTPHHFFSPDPFERNLGRFRKTPNEGTLFYGLVQDGNDMWDATFFCGSCAVIRRKPLDEIGGIAVETVTEDAHTSLRLHRRGYTSAYMRIPQAAGLATESLSAHIGQRIRWARGMVQIFRLDNPLTGKGLKFAQRLCYVNAMFHFLSGIPRLIFLTAPLAFLLLHAYIIYAPALMIALFVLPHMIHASLTNSKIQGKYRHSFWSEIYETVLAWYIAPPTLVALINPHKGKFNVTAKGGLVEEEYVDWVISRPYIFLVLLNLVGVAVGIWRYFYGPPTEMLTVVVSMVWVFYNLIVLGGAVAVSVESKQVRRSHRVEMTMPAAIAREDGHLFSCTVQDFSDGGLGIKINGQAQILEGQKVNLLLKRGQQEYVFPTQVARVMGNEVGLKLMPLTTQQHIDFVQCTFARADTWALWQDSYPEDKPLESLLDILKLGFRGYRHLAEFAPSSVKGIFRVLTSLVSWVVSFIPRRPERSETAQPSDQALAQQ.

4 consecutive transmembrane segments (helical) span residues 30-50, 151-171, 173-193, and 230-250; these read SAFS…FIPL, ILGI…TQPF, PLAQ…VRRM, and LVCG…LVLG. Residues 271 to 364 form a catalytic subdomain A region; it reads LWPSVDIFVP…FVSIFDCDHV (94 aa). D313 is a catalytic residue. Substrate contacts are provided by D360 and D362. A catalytic subdomain B region spans residues 441-501; it reads KPLDEIGGIA…GQRIRWARGM (61 aa). D457 is a catalytic residue. 5 helical membrane-spanning segments follow: residues 525-545, 547-567, 592-612, 640-660, and 668-688; these read VNAM…TAPL, FLLL…LFVL, IYET…LINP, IFLV…YFYG, and VVVS…AVAV. Residues 694-790 enclose the PilZ domain; it reads QVRRSHRVEM…QHIDFVQCTF (97 aa). A helical transmembrane segment spans residues 833 to 853; sequence SVKGIFRVLTSLVSWVVSFIP.

This sequence belongs to the glycosyltransferase 2 family. Requires Mg(2+) as cofactor.

The protein resides in the cell inner membrane. It catalyses the reaction [(1-&gt;4)-beta-D-glucosyl](n) + UDP-alpha-D-glucose = [(1-&gt;4)-beta-D-glucosyl](n+1) + UDP + H(+). It functions in the pathway glycan metabolism; bacterial cellulose biosynthesis. Activated by bis-(3'-5') cyclic diguanylic acid (c-di-GMP). Catalytic subunit of cellulose synthase. It polymerizes uridine 5'-diphosphate glucose to cellulose, which is produced as an extracellular component for mechanical and chemical protection at the onset of the stationary phase, when the cells exhibit multicellular behavior (rdar morphotype). Coexpression of cellulose and thin aggregative fimbriae (curli fimbrae or fibers) leads to a hydrophobic network with tightly packed cells embedded in a highly inert matrix that confers cohesion, elasticity and tissue-like properties to colonies. The protein is Cellulose synthase catalytic subunit [UDP-forming] (bcsA) of Escherichia coli (strain K12).